Here is a 265-residue protein sequence, read N- to C-terminus: Esterase claE (265 aa).

Active-site charge relay system residues include S121, D211, and H239.

It belongs to the LovG family.

It functions in the pathway secondary metabolite biosynthesis. In terms of biological role, esterase; part of the cla gene cluster that produces clavatol and ortho-quinone methide. The clavatol biosynthesis cluster cla and the terrestric acid cluster tra are both involved in the production of peniphenones and penilactones. The non-reducing PKS claF is responsible for the formation of clavatol from successive condensations of 3 malonyl-CoA units, presumably with a simple acetyl-CoA starter unit, and 2 methylation steps. The esterase claE probably collaborates with claF by catalyzing the hydrolysis of ACP-bound acyl intermediates to free the ACP from stalled intermediates. The clavatol oxidase claD then converts clavatol to hydroxyclavatol. Spontaneous dehydration of hydroxyclavatol leads to the accumulation of the highly active ortho-quinone methide. On the other hand, the PKS-NRPS hybrid traA is involved in the formation of crustosic acid, with the help of traB and traD. The polyketide synthase module (PKS) of traA is responsible for the synthesis of the polyketide backbone via the condensation of an acetyl-CoA starter unit with 3 malonyl-CoA units. The downstream nonribosomal peptide synthetase (NRPS) module then amidates the carboxyl end of the polyketide with L-malic acid. Because traA lacks a designated enoylreductase (ER) domain, the required activity is provided the enoyl reductase traG. Crustosic acid undergoes decarboxylation and isomerization to the terrestric acid, catalyzed by the 2-oxoglutarate-dependent dioxygenase traH. Both acids are further converted to the 2 gamma-butyrolactones (R)-5-methyltetronic acid and (S)-5-carboxylmethyltetronic acid, with involvement of the cytochrome P450 monooxygenase claJ. Spontaneous addition of the methide to these gamma-butyrolactones leads to peniphenone D and penilactone D, which undergo again stereospecific attacking by methide to give penilactones A and B. In Penicillium crustosum (Blue mold fungus), this protein is Esterase claE.